The following is a 444-amino-acid chain: UDP-N-acetylmuramoylalanine--D-glutamate ligase (444 aa).

An ATP-binding site is contributed by 118–124; the sequence is GTNGKTT.

It belongs to the MurCDEF family.

It is found in the cytoplasm. The catalysed reaction is UDP-N-acetyl-alpha-D-muramoyl-L-alanine + D-glutamate + ATP = UDP-N-acetyl-alpha-D-muramoyl-L-alanyl-D-glutamate + ADP + phosphate + H(+). It functions in the pathway cell wall biogenesis; peptidoglycan biosynthesis. Functionally, cell wall formation. Catalyzes the addition of glutamate to the nucleotide precursor UDP-N-acetylmuramoyl-L-alanine (UMA). The protein is UDP-N-acetylmuramoylalanine--D-glutamate ligase of Protochlamydia amoebophila (strain UWE25).